Consider the following 921-residue polypeptide: Guanylate kinase-associated protein mars (921 aa).

Ser49 is subject to Phosphoserine. Thr51 is subject to Phosphothreonine. Residues Ser76 and Ser170 each carry the phosphoserine modification. Residue Tyr172 is modified to Phosphotyrosine. Disordered regions lie at residues 179-208 and 273-325; these read GKGKAAEPIKPSIPKPTSAAAPPSSNTVAA and RPTP…PLGN. Low complexity-rich tracts occupy residues 193–208 and 273–285; these read KPTSAAAPPSSNTVAA and RPTPATVTKAKTP. Ser444 carries the phosphoserine modification. Positions 500–531 are disordered; it reads QTTVKEDTGDSTLVPEGTKTPPRRESNGMPNY. Residue Thr519 is modified to Phosphothreonine. Phosphoserine is present on Ser554. Disordered regions lie at residues 641 to 660 and 743 to 763; these read AGATGKNSQPNDGSEDSKPV and TKVEEPTLEDGLPATSSRHSS. Phosphoserine occurs at positions 785 and 792. 2 disordered regions span residues 809 to 833 and 861 to 921; these read QNAAKTPPPKPRTSILKTPGTTKRQ and ETVG…SEFM. Thr826 is subject to Phosphothreonine. Over residues 878–907 the composition is skewed to polar residues; the sequence is EASTESGSLEQNPGRDSNQENEATPRTYTL.

The protein belongs to the SAPAP family. Expressed in the central nervous system and at different stages of gametogenesis. In embryos, it is expressed in central nervous system and brain. In testis, it is strongly expressed in pre-meiotic germ cells, but is not found in somatic or post-meiotic cells.

It localises to the cell membrane. The protein localises to the nucleus. The protein resides in the nucleoplasm. It is found in the cytoplasm. Its subcellular location is the cytoskeleton. It localises to the spindle. Functionally, cell cycle regulator. This chain is Guanylate kinase-associated protein mars (mars), found in Drosophila melanogaster (Fruit fly).